A 651-amino-acid chain; its full sequence is Threonine--tRNA ligase (651 aa).

The region spanning 1–61 (MIKITFPDNS…NDDATVKLLK (61 aa)) is the TGS domain. The catalytic stretch occupies residues 242–541 (DHRKIGKEMD…LIEHTAGKFP (300 aa)). Cys337, His388, and His518 together coordinate Zn(2+).

This sequence belongs to the class-II aminoacyl-tRNA synthetase family. Homodimer. Zn(2+) is required as a cofactor.

The protein localises to the cytoplasm. The catalysed reaction is tRNA(Thr) + L-threonine + ATP = L-threonyl-tRNA(Thr) + AMP + diphosphate + H(+). Catalyzes the attachment of threonine to tRNA(Thr) in a two-step reaction: L-threonine is first activated by ATP to form Thr-AMP and then transferred to the acceptor end of tRNA(Thr). Also edits incorrectly charged L-seryl-tRNA(Thr). In Parabacteroides distasonis (strain ATCC 8503 / DSM 20701 / CIP 104284 / JCM 5825 / NCTC 11152), this protein is Threonine--tRNA ligase.